The sequence spans 324 residues: MSARNAASARTVACLLGPTASGKTAAALALAARRPIEIVSVDSALVYRGMDIGTAKPTRDERAAVPHHLIDIVDPADAYSAAEFRADALRLVAQIAARGRTPLLAGGTMLYYRALTQGLNDLPAADPDVRATLDADAARDGWPALHARLAGIDPATAARLAPNDSQRIQRALEVYLLTGQPMSALLAAPPRDDDAAAGLRFVPVALEPSERAVLHARIAARFDAMLEAGFIDEVERLRRRDDLHLGLPSMRCVGYRQAWEYLDGCTDYRTMRDKGIFATRQLCKRQLTWLRAMPERIVVDCCAPDATVRAVDALERVLDGRAPA.

17-24 (GPTASGKT) serves as a coordination point for ATP. 19–24 (TASGKT) is a binding site for substrate. Interaction with substrate tRNA regions lie at residues 42 to 45 (DSAL), 166 to 170 (QRIQR), and 251 to 256 (RCVGYR).

This sequence belongs to the IPP transferase family. As to quaternary structure, monomer. Mg(2+) is required as a cofactor.

The catalysed reaction is adenosine(37) in tRNA + dimethylallyl diphosphate = N(6)-dimethylallyladenosine(37) in tRNA + diphosphate. Catalyzes the transfer of a dimethylallyl group onto the adenine at position 37 in tRNAs that read codons beginning with uridine, leading to the formation of N6-(dimethylallyl)adenosine (i(6)A). This chain is tRNA dimethylallyltransferase, found in Burkholderia pseudomallei (strain 668).